A 361-amino-acid chain; its full sequence is Phospho-N-acetylmuramoyl-pentapeptide-transferase (361 aa).

The next 10 membrane-spanning stretches (helical) occupy residues 21–41, 72–92, 94–114, 135–155, 169–189, 200–220, 240–260, 263–283, 289–309, and 338–358; these read YITFRTGGAMVTALLISFVIG, TPTMGGLMILIAVIVSTLLWV, LANVYTWIVLLVTVGFGLIGF, LAWTIAIAGVAATWYIAVTPH, LLVNLGWFFIPFAILVMVGAS, GLAIVPIMIAAATFGLIAYLS, LAVFCGALVGAGLGFLWFNAP, MVFMGDTGSLSMGGALGAVSV, LVLAIVGGLFVLEAVSVMVQV, and TVVIRFWIIAAILALVGLSTL.

This sequence belongs to the glycosyltransferase 4 family. MraY subfamily. The cofactor is Mg(2+).

It is found in the cell inner membrane. The enzyme catalyses UDP-N-acetyl-alpha-D-muramoyl-L-alanyl-gamma-D-glutamyl-meso-2,6-diaminopimeloyl-D-alanyl-D-alanine + di-trans,octa-cis-undecaprenyl phosphate = di-trans,octa-cis-undecaprenyl diphospho-N-acetyl-alpha-D-muramoyl-L-alanyl-D-glutamyl-meso-2,6-diaminopimeloyl-D-alanyl-D-alanine + UMP. The protein operates within cell wall biogenesis; peptidoglycan biosynthesis. Catalyzes the initial step of the lipid cycle reactions in the biosynthesis of the cell wall peptidoglycan: transfers peptidoglycan precursor phospho-MurNAc-pentapeptide from UDP-MurNAc-pentapeptide onto the lipid carrier undecaprenyl phosphate, yielding undecaprenyl-pyrophosphoryl-MurNAc-pentapeptide, known as lipid I. The protein is Phospho-N-acetylmuramoyl-pentapeptide-transferase of Rhodospirillum centenum (strain ATCC 51521 / SW).